The sequence spans 305 residues: UDP-3-O-acyl-N-acetylglucosamine deacetylase (305 aa).

Zn(2+) is bound by residues His79, His238, and Asp242. His265 serves as the catalytic Proton donor.

This sequence belongs to the LpxC family. The cofactor is Zn(2+).

The enzyme catalyses a UDP-3-O-[(3R)-3-hydroxyacyl]-N-acetyl-alpha-D-glucosamine + H2O = a UDP-3-O-[(3R)-3-hydroxyacyl]-alpha-D-glucosamine + acetate. Its pathway is glycolipid biosynthesis; lipid IV(A) biosynthesis; lipid IV(A) from (3R)-3-hydroxytetradecanoyl-[acyl-carrier-protein] and UDP-N-acetyl-alpha-D-glucosamine: step 2/6. Catalyzes the hydrolysis of UDP-3-O-myristoyl-N-acetylglucosamine to form UDP-3-O-myristoylglucosamine and acetate, the committed step in lipid A biosynthesis. The polypeptide is UDP-3-O-acyl-N-acetylglucosamine deacetylase (Vibrio vulnificus (strain CMCP6)).